A 286-amino-acid polypeptide reads, in one-letter code: MNQDILHRYLFDNADVRGELVQLQESYQQVLDAQAYPPVLQILLGELMAATSLLTATLKFSGDISVQLQGNGPVSLAVINGNNLQQLRGVARWNGELTDNASLADLFGQGYMVITLTPDEGERYQGVVALDKPTLAACVEEYFNQSEQLPTALWLFANGQQAAGMFLQILPSQEDHHQDFEHLSQLTSTIKAEELFTLDAENVLHRLYHQEEVRLFDPIEVSFKCTCSRERSAAAIKTLEQAEVEAILAEEGKIEMGCEYCNANYVFDGIDITTIFANGQNSNIPQ.

Cystine bridges form between cysteine 225–cysteine 227 and cysteine 258–cysteine 261.

This sequence belongs to the HSP33 family. Under oxidizing conditions two disulfide bonds are formed involving the reactive cysteines. Under reducing conditions zinc is bound to the reactive cysteines and the protein is inactive.

It localises to the cytoplasm. Functionally, redox regulated molecular chaperone. Protects both thermally unfolding and oxidatively damaged proteins from irreversible aggregation. Plays an important role in the bacterial defense system toward oxidative stress. The sequence is that of 33 kDa chaperonin from Shewanella putrefaciens (strain CN-32 / ATCC BAA-453).